Reading from the N-terminus, the 164-residue chain is MRCPFCRHDDTQVVDSRVSEDGAAIRRRRRCPACDKRFTTYERVELALPSVVKKDGSRTEFDRRKIVASMQLALRKRPVAADAIDAAASRIEYQLLGSGEREVRSERLGELVMNELRALDTIAYVRFASVYRRFEDVSEFEDVIEEFRRTNAPPAAPAKPTRKR.

Residues 3 to 34 fold into a zinc finger; that stretch reads CPFCRHDDTQVVDSRVSEDGAAIRRRRRCPAC. Positions 49 to 139 constitute an ATP-cone domain; that stretch reads PSVVKKDGSR…VYRRFEDVSE (91 aa).

The protein belongs to the NrdR family. Requires Zn(2+) as cofactor.

Its function is as follows. Negatively regulates transcription of bacterial ribonucleotide reductase nrd genes and operons by binding to NrdR-boxes. The chain is Transcriptional repressor NrdR from Paraburkholderia phymatum (strain DSM 17167 / CIP 108236 / LMG 21445 / STM815) (Burkholderia phymatum).